The following is a 253-amino-acid chain: Putative ankyrin repeat protein NMB1133/NMB1171 (253 aa).

ANK repeat units lie at residues 196 to 225 (DGYT…NPAS) and 229 to 252 (EGYT…LEPR).

This chain is Putative ankyrin repeat protein NMB1133/NMB1171, found in Neisseria meningitidis serogroup B (strain ATCC BAA-335 / MC58).